The primary structure comprises 320 residues: TPR repeat-containing protein MJ0263 (320 aa).

TPR repeat units lie at residues 12–45, 46–79, 80–113, 114–147, 148–181, 182–215, 216–249, 250–283, and 289–320; these read ILKDVVNALECADKGNFDKALEYLEKAQKVDKDN, PLVLYVKGIVLKLKGDMEKAEKYFECLENIEGTS, LLSLGNLICLTFVKGEYERTLKYIEKLSRLSKPC, YLSPFHKALIYIEFGEFEKALEALDEFLKIYPNL, TSILRQKASILEILGKLDEALDCVNKILSIKKDD, AHAWYLKGRILKKLGNIKEALDALKMAINLNENL, VHVYKDIAYLELANNNYEEALNYITKYLEKFPND, VEAKFYLALIYENLNKVDDALKIYDKIISNKNVK, and KSSILNKARILEKLGKIEEAVETYNKAFDNNI.

The chain is TPR repeat-containing protein MJ0263 from Methanocaldococcus jannaschii (strain ATCC 43067 / DSM 2661 / JAL-1 / JCM 10045 / NBRC 100440) (Methanococcus jannaschii).